The sequence spans 78 residues: Teretoxin Tsu6.15 (78 aa).

The N-terminal stretch at 1–21 (MATSGRLLCFCLVLGLVFESL) is a signal peptide. Positions 22 to 47 (GYSEARPPRDRKRTVTAKRYDPLAQR) are excised as a propeptide.

This sequence belongs to the teretoxin M (TM) superfamily. Post-translationally, contains 3 disulfide bonds. Expressed by the venom duct.

The protein localises to the secreted. This chain is Teretoxin Tsu6.15, found in Terebra subulata (Chocolate spotted auger).